Reading from the N-terminus, the 104-residue chain is Large ribosomal subunit protein bL21 (104 aa).

Belongs to the bacterial ribosomal protein bL21 family. As to quaternary structure, part of the 50S ribosomal subunit. Contacts protein L20.

In terms of biological role, this protein binds to 23S rRNA in the presence of protein L20. The polypeptide is Large ribosomal subunit protein bL21 (Lactococcus lactis subsp. lactis (strain IL1403) (Streptococcus lactis)).